The primary structure comprises 249 residues: DNA repair protein RecO (249 aa).

It belongs to the RecO family.

Its function is as follows. Involved in DNA repair and RecF pathway recombination. The chain is DNA repair protein RecO from Exiguobacterium sibiricum (strain DSM 17290 / CCUG 55495 / CIP 109462 / JCM 13490 / 255-15).